A 408-amino-acid chain; its full sequence is Putative F-box protein At1g53550 (408 aa).

In terms of domain architecture, F-box spans 29 to 74 (TCYFDPIPVDLVINILSRLSLECIARCRCVSKLWSSIIRRPNYNQL).

This is Putative F-box protein At1g53550 from Arabidopsis thaliana (Mouse-ear cress).